Consider the following 95-residue polypeptide: Aspartyl/glutamyl-tRNA(Asn/Gln) amidotransferase subunit C (95 aa).

The protein belongs to the GatC family. As to quaternary structure, heterotrimer of A, B and C subunits.

The catalysed reaction is L-glutamyl-tRNA(Gln) + L-glutamine + ATP + H2O = L-glutaminyl-tRNA(Gln) + L-glutamate + ADP + phosphate + H(+). It catalyses the reaction L-aspartyl-tRNA(Asn) + L-glutamine + ATP + H2O = L-asparaginyl-tRNA(Asn) + L-glutamate + ADP + phosphate + 2 H(+). Allows the formation of correctly charged Asn-tRNA(Asn) or Gln-tRNA(Gln) through the transamidation of misacylated Asp-tRNA(Asn) or Glu-tRNA(Gln) in organisms which lack either or both of asparaginyl-tRNA or glutaminyl-tRNA synthetases. The reaction takes place in the presence of glutamine and ATP through an activated phospho-Asp-tRNA(Asn) or phospho-Glu-tRNA(Gln). This Bartonella quintana (strain Toulouse) (Rochalimaea quintana) protein is Aspartyl/glutamyl-tRNA(Asn/Gln) amidotransferase subunit C.